A 719-amino-acid polypeptide reads, in one-letter code: Polyribonucleotide nucleotidyltransferase (719 aa).

Aspartate 491 and aspartate 497 together coordinate Mg(2+). Residues 558–617 (PRMLTIKINPEKIRDVIGKGGATIRALTEETGTQIDISDDGTIVIASVDEAQAKEAQRRI) form the KH domain. One can recognise an S1 motif domain in the interval 627–695 (GQVYDGSVLR…DKGRLRLSVK (69 aa)).

This sequence belongs to the polyribonucleotide nucleotidyltransferase family. Requires Mg(2+) as cofactor.

It localises to the cytoplasm. It catalyses the reaction RNA(n+1) + phosphate = RNA(n) + a ribonucleoside 5'-diphosphate. In terms of biological role, involved in mRNA degradation. Catalyzes the phosphorolysis of single-stranded polyribonucleotides processively in the 3'- to 5'-direction. This chain is Polyribonucleotide nucleotidyltransferase, found in Bordetella petrii (strain ATCC BAA-461 / DSM 12804 / CCUG 43448).